The primary structure comprises 177 residues: Small ribosomal subunit protein uS5 (177 aa).

The 64-residue stretch at 21–84 (LKEKMVSVNR…DEARQRMVRV (64 aa)) folds into the S5 DRBM domain.

The protein belongs to the universal ribosomal protein uS5 family. In terms of assembly, part of the 30S ribosomal subunit. Contacts proteins S4 and S8.

Its function is as follows. With S4 and S12 plays an important role in translational accuracy. Located at the back of the 30S subunit body where it stabilizes the conformation of the head with respect to the body. The protein is Small ribosomal subunit protein uS5 of Nitrosomonas europaea (strain ATCC 19718 / CIP 103999 / KCTC 2705 / NBRC 14298).